The sequence spans 931 residues: Dymeclin (931 aa).

Disordered stretches follow at residues 1–53 (MGVA…SSTT), 599–618 (SPSKINTNNSNNNVKDNTNN), and 839–931 (DANN…EKTN). Residue Gly2 is the site of N-myristoyl glycine attachment. Composition is skewed to low complexity over residues 27-49 (NNNKNNNNNNNNNNNNNNNNNNN) and 601-618 (SKINTNNSNNNVKDNTNN). Positions 839–858 (DANNFTPKKQLSSDQLHSPP) are enriched in polar residues. Composition is skewed to low complexity over residues 859–876 (TNTTTTTTTTTNSTSSNT) and 889–901 (QLQQQNNLRNQEQ). Polar residues predominate over residues 919–931 (TTGVELSSTEKTN).

The protein belongs to the dymeclin family.

The sequence is that of Dymeclin (dym) from Dictyostelium discoideum (Social amoeba).